Here is an 859-residue protein sequence, read N- to C-terminus: MHTPKCRRPSMSATLSHKDLAGLAGCSALAFVLYLNTLNAGFVYDDRRAILANGDVTGARPLANLLRNDFWGTPLVDSGSHGSWRPLCVLSFRLNYLAGGMTPLGYHLVNVMLHCVATWLVFLVARTLLPSRMGVLAAGALFAVHPAHTEAVAGLVGRADLASCVCYLLAYLSYRRHMLNREWGSLILTIMLALAALLCKETAITALLLCGLCDVLSPVGRENSDKVCDGSISGLASFNFQRRFRSLSILGFTLLCGLYCRLSLLPRPSTAFSAADNPTAHESCFWTRTLTFLYLPVANFGILLWPQELSFDWGMEAVSRIRTLWDARNILTAGFYGSLVAILWKGSGLRSAASPMDFAEVANISLPLLRRLGGNSCHTWLGLTCDCHHQLSAPSYRSASAIYSTSSKSKSASWTAAPILGTAFLVLPFLPASNLLFYVGFVMAERVLYLPSVGYCLLFGLGFGHLWQRVNSSWRSRLMLLCGLALLLGVHGVRTFRRNLDWRDEEQLFRSAISINPPKALGNLGSVLSAQGRYEEAELTLRMTLGHRPTMADAHFNLGVVHQKQLNFSSAIPCFRRAIELRPQLAVAYLNLGTSLISLGDHRQEAISVLRTGARLEGSGVRDRGAHVEARYTCYLQLSVLYRSDGRLQDAAAALRESLKALPLLPQKQRAVLHLRLGEILAELQDWNEAEHQQRLAMQLQPEQGAAYVTYGQTLARNGSRLAEAESWFKRALQLAPLEPSSHHHYADFLEQQERHHEALGLRLRAAALAPQDYTLQSCVADALRLLNRLAEAELWYRKAVTLQPMAAHAHANLGAILQMRGLRKEAVACYHKALELQPGHAISRANLARMNVHKHENE.

The Cytoplasmic segment spans residues 1–22 (MHTPKCRRPSMSATLSHKDLAG). Residues 23–43 (LAGCSALAFVLYLNTLNAGFV) form a helical membrane-spanning segment. The Extracellular portion of the chain corresponds to 44-103 (YDDRRAILANGDVTGARPLANLLRNDFWGTPLVDSGSHGSWRPLCVLSFRLNYLAGGMTP). The chain crosses the membrane as a helical span at residues 104-124 (LGYHLVNVMLHCVATWLVFLV). Residues 125–134 (ARTLLPSRMG) lie on the Cytoplasmic side of the membrane. A run of 2 helical transmembrane segments spans residues 135-154 (VLAAGALFAVHPAHTEAVAG) and 155-174 (LVGRADLASCVCYLLAYLSY). At 175 to 189 (RRHMLNREWGSLILT) the chain is on the cytoplasmic side. A helical transmembrane segment spans residues 190–210 (IMLALAALLCKETAITALLLC). The Extracellular segment spans residues 211–245 (GLCDVLSPVGRENSDKVCDGSISGLASFNFQRRFR). Residues 246–266 (SLSILGFTLLCGLYCRLSLLP) form a helical membrane-spanning segment. Residues 267 to 288 (RPSTAFSAADNPTAHESCFWTR) are Cytoplasmic-facing. A helical transmembrane segment spans residues 289–309 (TLTFLYLPVANFGILLWPQEL). Residues 310–328 (SFDWGMEAVSRIRTLWDAR) lie on the Extracellular side of the membrane. A helical transmembrane segment spans residues 329–349 (NILTAGFYGSLVAILWKGSGL). The Cytoplasmic segment spans residues 350-422 (RSAASPMDFA…SWTAAPILGT (73 aa)). A helical membrane pass occupies residues 423–443 (AFLVLPFLPASNLLFYVGFVM). Residues 444–446 (AER) lie on the Extracellular side of the membrane. A helical membrane pass occupies residues 447-467 (VLYLPSVGYCLLFGLGFGHLW). Residues 468-473 (QRVNSS) lie on the Cytoplasmic side of the membrane. Residues 474 to 493 (WRSRLMLLCGLALLLGVHGV) traverse the membrane as a helical segment. Residues 494-859 (RTFRRNLDWR…RMNVHKHENE (366 aa)) lie on the Extracellular side of the membrane. TPR repeat units follow at residues 518 to 551 (PKALGNLGSVLSAQGRYEEAELTLRMTLGHRPTM), 552 to 585 (ADAHFNLGVVHQKQLNFSSAIPCFRRAIELRPQL), 586 to 620 (AVAYLNLGTSLISLGDHRQEAISVLRTGARLEGSG), 632 to 665 (YTCYLQLSVLYRSDGRLQDAAAALRESLKALPLL), 671 to 704 (AVLHLRLGEILAELQDWNEAEHQQRLAMQLQPEQ), 705 to 739 (GAAYVTYGQTLARNGSRLAEAESWFKRALQLAPLE), 740 to 773 (PSSHHHYADFLEQQERHHEALGLRLRAAALAPQD), 774 to 807 (YTLQSCVADALRLLNRLAEAELWYRKAVTLQPMA), and 808 to 841 (AHAHANLGAILQMRGLRKEAVACYHKALELQPGH). Asn-567 carries an N-linked (GlcNAc...) asparagine glycan. A glycan (N-linked (GlcNAc...) asparagine) is linked at Asn-718.

It belongs to the TMTC family.

Its subcellular location is the membrane. It is found in the endoplasmic reticulum. The enzyme catalyses a di-trans,poly-cis-dolichyl beta-D-mannosyl phosphate + L-seryl-[protein] = 3-O-(alpha-D-mannosyl)-L-seryl-[protein] + a di-trans,poly-cis-dolichyl phosphate + H(+). It carries out the reaction a di-trans,poly-cis-dolichyl beta-D-mannosyl phosphate + L-threonyl-[protein] = 3-O-(alpha-D-mannosyl)-L-threonyl-[protein] + a di-trans,poly-cis-dolichyl phosphate + H(+). Its pathway is protein modification; protein glycosylation. Its function is as follows. Transfers mannosyl residues to the hydroxyl group of serine or threonine residues. This is Protein O-mannosyl-transferase Tmtc1 from Drosophila melanogaster (Fruit fly).